The chain runs to 543 residues: Chaperonin GroEL 1 (543 aa).

ATP is bound by residues 29–32 (TLGP), 86–90 (DGTTT), glycine 413, 479–481 (NAA), and aspartate 495.

The protein belongs to the chaperonin (HSP60) family. Forms a cylinder of 14 subunits composed of two heptameric rings stacked back-to-back. Interacts with the co-chaperonin GroES.

It is found in the cytoplasm. It catalyses the reaction ATP + H2O + a folded polypeptide = ADP + phosphate + an unfolded polypeptide.. Functionally, together with its co-chaperonin GroES, plays an essential role in assisting protein folding. The GroEL-GroES system forms a nano-cage that allows encapsulation of the non-native substrate proteins and provides a physical environment optimized to promote and accelerate protein folding. The sequence is that of Chaperonin GroEL 1 from Prochlorococcus marinus (strain NATL2A).